We begin with the raw amino-acid sequence, 391 residues long: 3-ketoacyl-CoA thiolase (391 aa).

Cys-95 serves as the catalytic Acyl-thioester intermediate. Catalysis depends on proton acceptor residues His-347 and Cys-377.

Belongs to the thiolase-like superfamily. Thiolase family. In terms of assembly, heterotetramer of two alpha chains (FadB) and two beta chains (FadA).

It is found in the cytoplasm. It catalyses the reaction an acyl-CoA + acetyl-CoA = a 3-oxoacyl-CoA + CoA. It functions in the pathway lipid metabolism; fatty acid beta-oxidation. Catalyzes the final step of fatty acid oxidation in which acetyl-CoA is released and the CoA ester of a fatty acid two carbons shorter is formed. The polypeptide is 3-ketoacyl-CoA thiolase (Marinomonas sp. (strain MWYL1)).